The sequence spans 403 residues: Acetate kinase (403 aa).

Asn-7 is a binding site for Mg(2+). Lys-14 is a binding site for ATP. Residue Arg-95 coordinates substrate. The Proton donor/acceptor role is filled by Asp-152. ATP contacts are provided by residues His-212 to Gly-216, Asp-286 to Arg-288, and Gly-335 to Asn-339. Position 389 (Glu-389) interacts with Mg(2+).

This sequence belongs to the acetokinase family. Homodimer. The cofactor is Mg(2+). It depends on Mn(2+) as a cofactor.

Its subcellular location is the cytoplasm. It catalyses the reaction acetate + ATP = acetyl phosphate + ADP. The protein operates within metabolic intermediate biosynthesis; acetyl-CoA biosynthesis; acetyl-CoA from acetate: step 1/2. In terms of biological role, catalyzes the formation of acetyl phosphate from acetate and ATP. Can also catalyze the reverse reaction. In Desulfovibrio desulfuricans (strain ATCC 27774 / DSM 6949 / MB), this protein is Acetate kinase.